We begin with the raw amino-acid sequence, 475 residues long: Cytosolic non-specific dipeptidase (475 aa).

Residue A2 is modified to N-acetylalanine. Position 9 is an N6-acetyllysine (K9). Residue S58 is modified to Phosphoserine. Position 99 (H99) interacts with Mn(2+). D101 is a catalytic residue. Mn(2+) is bound at residue D132. The Proton acceptor role is filled by E166. Residues 166–167, D195, and H228 contribute to the substrate site; that span reads EE. The Mn(2+) site is built by E167 and D195. A Phosphoserine modification is found at S299. Residues T330, R343, S417, and H445 each contribute to the substrate site. Residue H445 participates in Mn(2+) binding.

It belongs to the peptidase M20A family. In terms of assembly, homodimer. Requires Mn(2+) as cofactor.

The protein localises to the cytoplasm. It carries out the reaction Hydrolysis of dipeptides, preferentially hydrophobic dipeptides including prolyl amino acids.. It catalyses the reaction L-threonyl-L-threonine + H2O = 2 L-threonine. The enzyme catalyses L-threonyl-L-serine + H2O = L-threonine + L-serine. The catalysed reaction is L-seryl-L-threonine + H2O = L-threonine + L-serine. It carries out the reaction L-cysteinylglycine + H2O = L-cysteine + glycine. It catalyses the reaction (S)-lactate + L-phenylalanine = N-[(S)-lactoyl]-L-phenylalanine + H2O. In terms of biological role, catalyzes the peptide bond hydrolysis in dipeptides, displaying a non-redundant activity toward threonyl dipeptides. Mediates threonyl dipeptide catabolism in a tissue-specific way. Has high dipeptidase activity toward cysteinylglycine, an intermediate metabolite in glutathione metabolism. Metabolizes N-lactoyl-amino acids, both through hydrolysis to form lactic acid and amino acids, as well as through their formation by reverse proteolysis. Plays a role in the regulation of cell cycle arrest and apoptosis. In Pongo abelii (Sumatran orangutan), this protein is Cytosolic non-specific dipeptidase (CNDP2).